The chain runs to 155 residues: DNA-directed RNA polymerase II subunit rpb4 (155 aa).

It belongs to the eukaryotic RPB4 RNA polymerase subunit family. In terms of assembly, component of the RNA polymerase II (Pol II) complex consisting of 12 subunits. RPB4 and RPB7 form a subcomplex that protrudes from the 10-subunit Pol II core complex.

The protein resides in the nucleus. Functionally, DNA-dependent RNA polymerase catalyzes the transcription of DNA into RNA using the four ribonucleoside triphosphates as substrates. Component of RNA polymerase II which synthesizes mRNA precursors and many functional non-coding RNAs. Pol II is the central component of the basal RNA polymerase II transcription machinery. It is composed of mobile elements that move relative to each other. RPB4 is part of a subcomplex with RPB7 that binds to a pocket formed by RPB1, RPB2 and RPB6 at the base of the clamp element. The RPB4-RPB7 subcomplex seems to lock the clamp via RPB7 in the closed conformation thus preventing double-stranded DNA to enter the active site cleft. The RPB4-RPB7 subcomplex binds single-stranded DNA and RNA. This Dictyostelium discoideum (Social amoeba) protein is DNA-directed RNA polymerase II subunit rpb4 (polr2d).